A 200-amino-acid chain; its full sequence is LHFPL tetraspan subfamily member 6 protein (200 aa).

Positions methionine 1–alanine 21 are cleaved as a signal peptide. Transmembrane regions (helical) follow at residues isoleucine 84–leucine 104, glycine 123–tryptophan 143, and isoleucine 166–tryptophan 186.

The protein belongs to the LHFP family. In terms of tissue distribution, pancreas, kidney, skeletal muscle, liver, lung brain, heart, colon, small intestine, uterus, testis, prostate, thymus, spleen and placenta.

It is found in the membrane. The polypeptide is LHFPL tetraspan subfamily member 6 protein (Homo sapiens (Human)).